Here is a 414-residue protein sequence, read N- to C-terminus: Serine/threonine transporter SstT (414 aa).

Helical transmembrane passes span 16-36 (GSLV…AWIS), 46-66 (LGTL…LMLV), 84-104 (ILFL…VFSF), 143-163 (ALLN…GFAL), 180-200 (AVTF…FGLV), 219-239 (LVVL…LLVF), 300-320 (MAGA…TLGV), and 332-352 (VVAS…LLLI).

This sequence belongs to the dicarboxylate/amino acid:cation symporter (DAACS) (TC 2.A.23) family.

The protein resides in the cell inner membrane. The catalysed reaction is L-serine(in) + Na(+)(in) = L-serine(out) + Na(+)(out). The enzyme catalyses L-threonine(in) + Na(+)(in) = L-threonine(out) + Na(+)(out). Functionally, involved in the import of serine and threonine into the cell, with the concomitant import of sodium (symport system). The protein is Serine/threonine transporter SstT of Salmonella heidelberg (strain SL476).